Consider the following 148-residue polypeptide: Large ribosomal subunit protein bL9 (148 aa).

This sequence belongs to the bacterial ribosomal protein bL9 family.

Binds to the 23S rRNA. In Thermobifida fusca (strain YX), this protein is Large ribosomal subunit protein bL9.